The following is a 99-amino-acid chain: Putative protein adenylyltransferase MJ0141 (99 aa).

The short motif at 29–43 (GSYARGDYDEESDVD) is the GSX(10)DXD motif element. Mg(2+)-binding residues include Asp-41 and Asp-43.

Belongs to the MntA antitoxin family. Mg(2+) is required as a cofactor.

It carries out the reaction L-tyrosyl-[protein] + ATP = O-(5'-adenylyl)-L-tyrosyl-[protein] + diphosphate. It catalyses the reaction O-(5'-adenylyl)-L-tyrosyl-[protein] + ATP = O-[5'-(adenylyl-(5'-&gt;3')-adenylyl)]-L-tyrosyl-[protein] + diphosphate. Putative antitoxin component of a putative type VII toxin-antitoxin (TA) system. Its cognate toxin might be MF0142, which it might AMPylate. This is Putative protein adenylyltransferase MJ0141 from Methanocaldococcus jannaschii (strain ATCC 43067 / DSM 2661 / JAL-1 / JCM 10045 / NBRC 100440) (Methanococcus jannaschii).